The following is a 186-amino-acid chain: Alkyl hydroperoxide reductase AhpD (186 aa).

Cysteine 131 (proton donor) is an active-site residue. A disulfide bridge connects residues cysteine 131 and cysteine 134. The Cysteine sulfenic acid (-SOH) intermediate role is filled by cysteine 134.

This sequence belongs to the AhpD family.

It catalyses the reaction N(6)-[(R)-dihydrolipoyl]-L-lysyl-[lipoyl-carrier protein] + a hydroperoxide = N(6)-[(R)-lipoyl]-L-lysyl-[lipoyl-carrier protein] + an alcohol + H2O. In terms of biological role, antioxidant protein with alkyl hydroperoxidase activity. Required for the reduction of the AhpC active site cysteine residues and for the regeneration of the AhpC enzyme activity. The sequence is that of Alkyl hydroperoxide reductase AhpD from Rhodospirillum centenum (strain ATCC 51521 / SW).